Consider the following 347-residue polypeptide: MSLEIQDSEVDIVIAALQPNLTTFFEAWRPFFSRFHIIVVKDPDMAEELQIPTGFDLKVYTKSDMGVLGATSIDFSGHSCRYFGYLVSRKKYVISIDDNCLPAKDNGGLTVDAVAQHMSNLKTPATPFFFNTLYDPFRKGADFVRGYPFSLREGVECMLSCGLWLHNADYDPMTHVVKRNQRNTTYVDAVMTVPLGAMMPVSGINVAFNREVLGPVMFPALRLRKEGKHRWDTLEDVWNGLCAKVVCDRLRYGVKTGLPYVMRSDAEAGKALESLKEWEGVKVMDVVLPFFESLKLSSTSVTVEDCVKELTSIVKEKLGPQNAIFAKAADAMEEWTKLWKSHGAQSA.

Arg-145 is a glycosylation site (N-linked (Glc...) arginine).

This sequence belongs to the RGP family. Heteromers with UAM1 and UAM3. In terms of processing, is not reversibly glycosylated in vitro by UDP-glucose, UDP-xylose and UDP-galactose.

It is found in the golgi apparatus. Its function is as follows. Probable inactive UDP-L-arabinose mutase. Inactive in vitro, but associates with UAM1 and UAM3. The protein is Probable inactive UDP-arabinopyranose mutase 2 of Oryza sativa subsp. japonica (Rice).